The sequence spans 203 residues: Thymidylate kinase (203 aa).

14 to 21 (GGEGSGKS) provides a ligand contact to ATP.

The protein belongs to the thymidylate kinase family.

It catalyses the reaction dTMP + ATP = dTDP + ADP. In terms of biological role, phosphorylation of dTMP to form dTDP in both de novo and salvage pathways of dTTP synthesis. This Rickettsia canadensis (strain McKiel) protein is Thymidylate kinase.